A 938-amino-acid polypeptide reads, in one-letter code: MDDSEVESTASILASVKEQEAQFEKLTRALEEERRHVSAQLERVRVSPQDANSLMANGTLTRRHQNGRFVGDADLERQKFSDLKLNGPQDHNHLLYSTIPRMQEPGQIVETYTEEDPEGAMSVVSVETTDDGTTRRTETTVKKVVKTMTTRTVQPVPMGPDGLPVDASAVSNNYIQTLGRDFRKNGNGGPGPYVGQAGTATLPRNFHYPPDGYGRHYEDGYPGGSDNYGSLSRVTRIEERYRPSMEGYRAPSRQDVYGPQPQVRVGGSSVDLHRFHPEPYGLEDDQRSMGYDDLDYGMMSDYGTARRTGTPSDPRRRLRSYEDMIGEEVPPDQYYWAPLAQHERGSLASLDSLRKGMPPPSNWRQPELPEVIAMLGFRLDAVKSNAAAYLQHLCYRNDKVKTDVRKLKGIPILVGLLDHPKKEVHLGACGALKNISFGRDQDNKIAIKNCDGVPALVRLLRKARDMDLTEVITGTLWNLSSHDSIKMEIVDHALHALTDEVIIPHSGWEREPNEDCKPRHIEWESVLTNTAGCLRNVSSERSEARRKLRECDGLVDALIFIVQAEIGQKDSDSKLVENCVCLLRNLSYQVHREIPQAERYQEALPTVANSTGPHAASCFGAKKGKDEWFSRGKKPTEDPANDTVDFPKRTSPARGYELLFQPEVVRIYISLLKESKTPAILEASAGAIQNLCAGRWTYGRYIRSALRQEKALSAIAELLTSEHERVVKAASGALRNLAVDARNKELIGKHAIPNLVKNLPGGQQNSSWNFSEDTVVSILNTINEVIAENLEAAKKLRETQGIEKLVLINKSGNRSEKEVRAAALVLQTIWGYKELRKPLEKEGWKKSDFQVNLNNASRSQSSHSYDDSTLPLIDRNQKSDKKPDREEIPMSNMGSNTKSLDNNYSTLNERGDHNRTLDRSGDLGDMEPLKGAPLMQKI.

Residue methionine 1 is modified to N-acetylmethionine. Residues 1 to 357 form a necessary and sufficient for interaction with CCDC85B region; sequence MDDSEVESTA…ASLDSLRKGM (357 aa). Residue serine 4 is modified to Phosphoserine. Residues 10–46 are a coiled coil; sequence ASILASVKEQEAQFEKLTRALEEERRHVSAQLERVRV. At serine 47 the chain carries Phosphoserine. Position 59 is a phosphothreonine (threonine 59). Tyrosine 112 bears the Phosphotyrosine; by FYN mark. Serine 125 bears the Phosphoserine mark. Tyrosine 217 and tyrosine 221 each carry phosphotyrosine. Residue serine 225 is modified to Phosphoserine. Tyrosine 228 bears the Phosphotyrosine mark. Phosphoserine is present on residues serine 230 and serine 252. Tyrosine 257 carries the phosphotyrosine modification. 2 positions are modified to phosphoserine: serine 268 and serine 269. At tyrosine 280 the chain carries Phosphotyrosine. A Phosphoserine modification is found at serine 288. Tyrosine 291 is subject to Phosphotyrosine. Phosphoserine is present on serine 300. Threonine 304 is modified (phosphothreonine). Phosphoserine occurs at positions 320, 346, 349, and 352. ARM repeat units follow at residues 358 to 395, 398 to 437, 441 to 475, and 476 to 516; these read PPPS…HLCY, DKVK…NISF, QDNK…ITGT, and LWNL…NEDC. A Glycyl lysine isopeptide (Lys-Gly) (interchain with G-Cter in SUMO2) cross-link involves residue lysine 421. Lysine 517 is covalently cross-linked (Glycyl lysine isopeptide (Lys-Gly) (interchain with G-Cter in SUMO2)). ARM repeat units lie at residues 534–573, 583–624, 653–693, 700–739, 740–780, and 781–826; these read LRNV…DSDS, LRNL…AKKG, ARGY…NLCA, RYIR…NLAV, DARN…SILN, and TINE…ALVL. At serine 617 the chain carries Phosphoserine. The Nuclear localization signal (NLS) motif lies at 622–629; it reads KKGKDEWF. Residue serine 713 is modified to Phosphoserine. Residues serine 811, serine 847, serine 857, serine 859, serine 861, and serine 864 each carry the phosphoserine modification. Residues 855 to 938 are disordered; it reads NASRSQSSHS…LKGAPLMQKI (84 aa). Residue tyrosine 865 is modified to Phosphotyrosine. Serine 868 is modified (phosphoserine). Threonine 869 bears the Phosphothreonine mark. Residues 875-888 show a composition bias toward basic and acidic residues; that stretch reads RNQKSDKKPDREEI. Serine 879 carries the phosphoserine modification. Lysine 882 is covalently cross-linked (Glycyl lysine isopeptide (Lys-Gly) (interchain with G-Cter in SUMO2)). The span at 892 to 908 shows a compositional bias: polar residues; it reads NMGSNTKSLDNNYSTLN. Serine 899 is modified (phosphoserine). Residue tyrosine 904 is modified to Phosphotyrosine. Residues threonine 906 and threonine 916 each carry the phosphothreonine modification. Positions 909-922 are enriched in basic and acidic residues; it reads ERGDHNRTLDRSGD. A Phosphoserine modification is found at serine 920.

It belongs to the beta-catenin family. In terms of assembly, belongs to a multiprotein cell-cell adhesion complex that also contains E-cadherin/CDH1, alpha-catenin/CTNNA1, beta-catenin/CTNNB1, and gamma-catenin/JUP. Binds to the C-terminal fragment of PSEN1 and mutually competes for CDH1. Interacts with ZBTB33. Interacts with GLIS2. Interacts with FER. Interacts with NANOS1 (via N-terminal region). Interacts (via N-terminus) with GNA12; the interaction regulates CDH1-mediated cell-cell adhesion. Interacts with GNA13. Component of a cadherin:catenin adhesion complex composed of at least of CDH26, beta-catenin/CTNNB1, alpha-catenin/CTNNA1 and p120 catenin/CTNND1. Interacts with CCDC85B. Interacts with PLPP3; negatively regulates the PLPP3-mediated stabilization of CTNNB1. Interacts with DSG3; the interaction facilitates DSG3 localization and retention at cell-cell junctions. Interacts with CTNND1/p120-catenin; the interaction controls CADH5 endocytosis. In terms of processing, phosphorylated by FER and other protein-tyrosine kinases. Phosphorylated at Ser-288 by PAK5. Dephosphorylated by PTPRJ. Expressed in basal keratinocytes (at protein level).

It localises to the cell junction. It is found in the adherens junction. The protein localises to the cytoplasm. The protein resides in the nucleus. Its subcellular location is the cell membrane. Functionally, key regulator of cell-cell adhesion that associates with and regulates the cell adhesion properties of both C-, E- and N-cadherins, being critical for their surface stability. Promotes localization and retention of DSG3 at cell-cell junctions, via its interaction with DSG3. Beside cell-cell adhesion, regulates gene transcription through several transcription factors including ZBTB33/Kaiso2 and GLIS2, and the activity of Rho family GTPases and downstream cytoskeletal dynamics. Implicated both in cell transformation by SRC and in ligand-induced receptor signaling through the EGF, PDGF, CSF-1 and ERBB2 receptors. The chain is Catenin delta-1 (Ctnnd1) from Mus musculus (Mouse).